Reading from the N-terminus, the 258-residue chain is Small ribosomal subunit protein uS2 (258 aa).

Positions 234–258 are disordered; sequence ETANAEEAMQKAAAVEAAAEAAPAQ. Residues 236–258 are compositionally biased toward low complexity; sequence ANAEEAMQKAAAVEAAAEAAPAQ.

Belongs to the universal ribosomal protein uS2 family.

In Desulfovibrio desulfuricans (strain ATCC 27774 / DSM 6949 / MB), this protein is Small ribosomal subunit protein uS2.